The chain runs to 507 residues: Glucose-6-phosphate isomerase (507 aa).

The active-site Proton donor is Glu-337. Active-site residues include His-368 and Lys-478.

This sequence belongs to the GPI family.

It is found in the cytoplasm. It carries out the reaction alpha-D-glucose 6-phosphate = beta-D-fructose 6-phosphate. It functions in the pathway carbohydrate biosynthesis; gluconeogenesis. It participates in carbohydrate degradation; glycolysis; D-glyceraldehyde 3-phosphate and glycerone phosphate from D-glucose: step 2/4. Functionally, catalyzes the reversible isomerization of glucose-6-phosphate to fructose-6-phosphate. The polypeptide is Glucose-6-phosphate isomerase (Novosphingobium aromaticivorans (strain ATCC 700278 / DSM 12444 / CCUG 56034 / CIP 105152 / NBRC 16084 / F199)).